The chain runs to 215 residues: Nitrate/nitrite response regulator protein NarP (215 aa).

The 117-residue stretch at 8–124 (QVMIVDDHPL…VLLEAIRAGA (117 aa)) folds into the Response regulatory domain. A 4-aspartylphosphate modification is found at Asp59. One can recognise an HTH luxR-type domain in the interval 147–212 (EEDPFSVLTE…AATILFLQQR (66 aa)). The H-T-H motif DNA-binding region spans 171 to 190 (NKQIASVLNISEQTVKVHIR).

Its function is as follows. This protein activates the expression of the nitrate reductase (narGHJI) and formate dehydrogenase-N (fdnGHI) operons and represses the transcription of the fumarate reductase (frdABCD) operon in response to a nitrate/nitrite induction signal transmitted by either the NarX or NarQ proteins. The protein is Nitrate/nitrite response regulator protein NarP (narP) of Escherichia coli (strain K12).